Here is a 233-residue protein sequence, read N- to C-terminus: TDEITSFSIPKFRPDQPNLIFQGGGYTTKEKLTLTKAVKNTVGRALYSLPIHIWDSETGNVADFTTTFIFVIDAPNGYNVADGFTFFIAPVDTKPQTGGGYLGVFNGKDYDKTAQTVAVEFDTFYNAAWDPSNGKRHIGIDVNTIKSISTKSWNLQNGEEAHVAISFNATTNVLSVTLLYPNLTGYTLSEVVPLKDVVPEWVRIGFSATTGAEYATHEVLSWTFLSELTGPSN.

Residues Glu-120 and Asp-122 each contribute to the Mn(2+) site. 4 residues coordinate Ca(2+): Asp-122, Phe-124, Asn-126, and Asp-130. The Mn(2+) site is built by Asp-130 and His-137. Residue Asn-168 is glycosylated (N-linked (GlcNAc...) asparagine).

This sequence belongs to the leguminous lectin family. Heterodimer of an alpha and a beta chain.

The sequence is that of Favin from Vicia faba (Broad bean).